The sequence spans 136 residues: Nucleoside diphosphate kinase (136 aa).

K10, F58, R86, T92, R104, and N114 together coordinate ATP. H117 (pros-phosphohistidine intermediate) is an active-site residue.

Belongs to the NDK family. As to quaternary structure, homotetramer. It depends on Mg(2+) as a cofactor.

The protein localises to the cytoplasm. The enzyme catalyses a 2'-deoxyribonucleoside 5'-diphosphate + ATP = a 2'-deoxyribonucleoside 5'-triphosphate + ADP. It catalyses the reaction a ribonucleoside 5'-diphosphate + ATP = a ribonucleoside 5'-triphosphate + ADP. Major role in the synthesis of nucleoside triphosphates other than ATP. The ATP gamma phosphate is transferred to the NDP beta phosphate via a ping-pong mechanism, using a phosphorylated active-site intermediate. This is Nucleoside diphosphate kinase from Mycolicibacterium paratuberculosis (strain ATCC BAA-968 / K-10) (Mycobacterium paratuberculosis).